A 257-amino-acid chain; its full sequence is MFSSDENLFNFIVFFILVMAFPTFILCQFFTSPYGKHYTSADSGTTISPPIAWAFMESPTLWLTIIVFRLGKNYTNPLAFLLISPYLFHYTNRTIIYPLRLRSRNTKNNFPLNIAVTAFIFNLLNAYIQSRWVSHYANYQEDDWFWVRFGIGLVIFGSGMLLNIWADGVLLGLKSQGGGYKIPRGGLFDYVSSPNYLGEIMEWLGWALMTWSWAGLAFFVYTCANLVPRAVSNHKWYLQKFGEDYPKNRKAVFPFLY.

6 helical membrane-spanning segments follow: residues 11–31 (FIVF…QFFT), 47–67 (ISPP…TIIV), 78–97 (LAFL…TIIY), 110–130 (FPLN…YIQS), 151–171 (IGLV…GVLL), and 200–220 (IMEW…AFFV).

It belongs to the steroid 5-alpha reductase family. Mostly expressed in leaves and hypocotyls and, to a lower extent, in stems, cotyledons, roots, seeds and callus.

The protein localises to the membrane. The catalysed reaction is a 3-oxo-5alpha-steroid + NADP(+) = a 3-oxo-Delta(4)-steroid + NADPH + H(+). The protein operates within plant hormone biosynthesis; brassinosteroid biosynthesis. Its activity is regulated as follows. Repressed by steroid (4-MA, VG106, PD91, PD17, Finasteride) and non-steroid (AS601811, AFA27, AFA76, AFA131, AFA192) inhibitors; steroid inhibitors are generally more efficient. Involved in a reduction step in the biosynthesis of the plant steroid, brassinolide (BL). Can use progesterone, testosterone, androstenedione and campestenone as substrate. In Solanum lycopersicum (Tomato), this protein is Steroid 5-alpha-reductase DET2.